Here is a 136-residue protein sequence, read N- to C-terminus: UPF0225 protein Pnap_0466 (136 aa).

It belongs to the UPF0225 family.

In Polaromonas naphthalenivorans (strain CJ2), this protein is UPF0225 protein Pnap_0466.